The following is a 112-amino-acid chain: Putative pterin-4-alpha-carbinolamine dehydratase (112 aa).

It belongs to the pterin-4-alpha-carbinolamine dehydratase family.

It catalyses the reaction (4aS,6R)-4a-hydroxy-L-erythro-5,6,7,8-tetrahydrobiopterin = (6R)-L-erythro-6,7-dihydrobiopterin + H2O. In Vibrio campbellii (strain ATCC BAA-1116), this protein is Putative pterin-4-alpha-carbinolamine dehydratase.